The following is a 421-amino-acid chain: 26S proteasome non-ATPase regulatory subunit 11A (421 aa).

The 165-residue stretch at 227–391 (AYSYFYEAFE…GVLIVFDEPP (165 aa)) folds into the PCI domain.

It belongs to the proteasome subunit S9 family. As to quaternary structure, component of the lid subcomplex of the 19S proteasome regulatory particle complex (also named PA700 complex). The 26S proteasome consists of a 20S proteasome core and two 19S regulatory subunits.

It localises to the nucleus. Its subcellular location is the cytoplasm. The protein localises to the cytosol. Functionally, component of the lid subcomplex of the 26S proteasome, a multiprotein complex involved in the ATP-dependent degradation of ubiquitinated proteins. In the complex, psmd11a is required for proteasome assembly. The chain is 26S proteasome non-ATPase regulatory subunit 11A (psmd11a) from Danio rerio (Zebrafish).